Consider the following 671-residue polypeptide: Solute carrier family 5 member 4 (671 aa).

Residues Met1–Ala38 are Cytoplasmic-facing. Residues Asp39–Val59 traverse the membrane as a helical segment. Residues Lys60–Thr65 are Extracellular-facing. Residues Val66–Phe86 traverse the membrane as a helical segment. Topologically, residues Ala87–Asn89 are cytoplasmic. The helical transmembrane segment at Ile90–Thr110 threads the bilayer. Residues Ala111–Ser116 are Extracellular-facing. Residues Phe117–Met137 form a helical membrane-spanning segment. At Thr138–Leu159 the chain is on the cytoplasmic side. Residues Ser160–Ile180 traverse the membrane as a helical segment. Lys181 is a topological domain (extracellular). Residues Leu182–Phe202 form a helical membrane-spanning segment. Topologically, residues Thr203–Gln218 are cytoplasmic. The helical transmembrane segment at Ala219 to Gly239 threads the bilayer. At Tyr240–Pro288 the chain is on the extracellular side. The chain crosses the membrane as a helical span at residues Gly289–Val309. The Cytoplasmic segment spans residues Gln310–Ala324. A helical membrane pass occupies residues Cys325–Ile345. Topologically, residues Ser346 to Pro378 are extracellular. The helical transmembrane segment at Met379–Ala399 threads the bilayer. The Cytoplasmic segment spans residues Ser400–Leu434. The chain crosses the membrane as a helical span at residues Ile435–Val455. The Extracellular segment spans residues Glu456–Thr467. The helical transmembrane segment at Glu468–Cys488 threads the bilayer. The Cytoplasmic segment spans residues Lys489 to Gln494. The helical transmembrane segment at Gly495 to Phe515 threads the bilayer. Residues Ser516–Tyr537 lie on the Extracellular side of the membrane. A helical membrane pass occupies residues Leu538 to Leu558. At Thr559–Thr650 the chain is on the cytoplasmic side. Acidic residues predominate over residues Asp583–Glu593. The segment at Asp583 to Glu604 is disordered. The span at Ala594–Glu604 shows a compositional bias: basic and acidic residues. The chain crosses the membrane as a helical span at residues Val651–Ala671.

Belongs to the sodium:solute symporter (SSF) (TC 2.A.21) family.

The protein resides in the cell membrane. Generates D-glucose-induced depolarization in a pH-dependent and Na(+)-independent manner, with activity in acidic conditions (pH 5) but not neutral conditions. This chain is Solute carrier family 5 member 4, found in Rattus norvegicus (Rat).